The following is a 322-amino-acid chain: CRISPR-associated endonuclease Cas1 (322 aa).

Positions 149, 214, and 229 each coordinate Mn(2+).

The protein belongs to the CRISPR-associated endonuclease Cas1 family. In terms of assembly, homodimer, forms a heterotetramer with a Cas2 homodimer. It depends on Mg(2+) as a cofactor. Mn(2+) serves as cofactor.

Its function is as follows. CRISPR (clustered regularly interspaced short palindromic repeat), is an adaptive immune system that provides protection against mobile genetic elements (viruses, transposable elements and conjugative plasmids). CRISPR clusters contain spacers, sequences complementary to antecedent mobile elements, and target invading nucleic acids. CRISPR clusters are transcribed and processed into CRISPR RNA (crRNA). Acts as a dsDNA endonuclease. Involved in the integration of spacer DNA into the CRISPR cassette. This is CRISPR-associated endonuclease Cas1 from Pyrococcus horikoshii (strain ATCC 700860 / DSM 12428 / JCM 9974 / NBRC 100139 / OT-3).